The following is a 953-amino-acid chain: Lysosomal alpha-glucosidase (953 aa).

A signal peptide spans 1–27 (MNIRKPLCSNSVVGACTLVSLTTAVIL). Residues 28-69 (GHLMLRELMLLPQDLHESSSGLWKTYRPHHQESYEPAPLHIQ) constitute a propeptide that is removed on maturation. The P-type domain occupies 80 to 131 (TQCDVTPNSRFDCAPDKGITQEQCEARGCCWVPAGQVLNGPVMGQPWCFFPP). Disulfide bonds link C82-C109, C92-C108, and C103-C127. N-linked (GlcNAc...) asparagine glycans are attached at residues N140, N233, and N390. Position 404 (D404) interacts with substrate. Residue N470 is glycosylated (N-linked (GlcNAc...) asparagine). The Nucleophile role is filled by D518. E521 is an active-site residue. An intrachain disulfide couples C533 to C558. 2 residues coordinate substrate: R600 and D616. Cysteines 647 and 658 form a disulfide. N652 is a glycosylation site (N-linked (GlcNAc...) asparagine). Position 674 (H674) interacts with substrate. N-linked (GlcNAc...) asparagine glycans are attached at residues N883 and N926.

The protein belongs to the glycosyl hydrolase 31 family.

The protein localises to the lysosome. Its subcellular location is the lysosome membrane. The enzyme catalyses Hydrolysis of terminal, non-reducing (1-&gt;4)-linked alpha-D-glucose residues with release of alpha-D-glucose.. Functionally, essential for the degradation of glycogen in lysosomes. Has highest activity on alpha-1,4-linked glycosidic linkages, but can also hydrolyze alpha-1,6-linked glucans. This Rattus norvegicus (Rat) protein is Lysosomal alpha-glucosidase (Gaa).